The sequence spans 455 residues: MSFIPHKLEQIKKMLDTIGASSVDQLFDEIPRHLRADTLKIKDGINEIQLANLMRKRANKNHHNINYIGAGAYSHHIPAAIWDIVARGEFYTAYTPYQAEASQGGLQVIYEFQTMMAGLTGMDASNASMYDGATALAESVLMAIRSNKKAKSQKVLIAEALHPTYLRVLETITKHQGIEFDIVNLDSKNGKTDVTKLEDFANTNYAAVVIQSPNFLGQLADVDGITNWAHKHGALVIAVTNPMSLAILKSPAEWGDNGADIVCGEGQPMGVPLASGGPYFGFMTCKMAHVRQMPGRIVGRTVDLDGNEGFCLTLQAREQHIRRAKATSNICTNQGLMVTAATIYMSLLGAEGLERVASISHENTQTLATELAKINGVSIRFNSAFFNEVVIDLPVNAETFVTEMEKEAIDAGYFLGEYHSDLANSIMVCATEIHTSEDIKEYIEATKKVLARIGG.

The protein belongs to the GcvP family. N-terminal subunit subfamily. The glycine cleavage system is composed of four proteins: P, T, L and H. In this organism, the P 'protein' is a heterodimer of two subunits.

It carries out the reaction N(6)-[(R)-lipoyl]-L-lysyl-[glycine-cleavage complex H protein] + glycine + H(+) = N(6)-[(R)-S(8)-aminomethyldihydrolipoyl]-L-lysyl-[glycine-cleavage complex H protein] + CO2. The glycine cleavage system catalyzes the degradation of glycine. The P protein binds the alpha-amino group of glycine through its pyridoxal phosphate cofactor; CO(2) is released and the remaining methylamine moiety is then transferred to the lipoamide cofactor of the H protein. This is Probable glycine dehydrogenase (decarboxylating) subunit 1 from Francisella tularensis subsp. tularensis (strain FSC 198).